A 614-amino-acid polypeptide reads, in one-letter code: Putative binding protein BMEII0691 (614 aa).

Positions 1–28 (MNRFIAFFRSVFLIGLVATAFGALPARA) are cleaved as a signal peptide.

This sequence belongs to the bacterial solute-binding protein 5 family.

The protein resides in the periplasm. The protein is Putative binding protein BMEII0691 of Brucella melitensis biotype 1 (strain ATCC 23456 / CCUG 17765 / NCTC 10094 / 16M).